A 177-amino-acid polypeptide reads, in one-letter code: Large ribosomal subunit protein uL6 (177 aa).

It belongs to the universal ribosomal protein uL6 family. Part of the 50S ribosomal subunit.

In terms of biological role, this protein binds to the 23S rRNA, and is important in its secondary structure. It is located near the subunit interface in the base of the L7/L12 stalk, and near the tRNA binding site of the peptidyltransferase center. In Alkalilimnicola ehrlichii (strain ATCC BAA-1101 / DSM 17681 / MLHE-1), this protein is Large ribosomal subunit protein uL6.